Reading from the N-terminus, the 677-residue chain is Zinc finger and BTB domain-containing protein 5 (677 aa).

The BTB domain maps to Cys24–Glu93. A compositionally biased stretch (polar residues) spans Leu158 to Gln181. Disordered regions lie at residues Leu158–Asn252 and Ser287–Cys312. Ser234 carries the phosphoserine modification. Lys239 participates in a covalent cross-link: Glycyl lysine isopeptide (Lys-Gly) (interchain with G-Cter in SUMO2). The span at Ser287–Asp300 shows a compositional bias: polar residues. Glycyl lysine isopeptide (Lys-Gly) (interchain with G-Cter in SUMO2) cross-links involve residues Lys322 and Lys330. The tract at residues Ser331–Asp387 is disordered. The span at Ala350–Ala365 shows a compositional bias: low complexity. Residues Glu366–Phe379 show a composition bias toward basic and acidic residues. A Phosphoserine modification is found at Ser371. Glycyl lysine isopeptide (Lys-Gly) (interchain with G-Cter in SUMO2) cross-links involve residues Lys404 and Lys415. Positions Leu447–Ala474 are disordered. A compositionally biased stretch (low complexity) spans Ser449 to Ser464. Lys541 participates in a covalent cross-link: Glycyl lysine isopeptide (Lys-Gly) (interchain with G-Cter in SUMO2). The segment covering Gln552 to Pro576 has biased composition (polar residues). Positions Gln552 to Thr585 are disordered. Residues Lys594 and Lys597 each participate in a glycyl lysine isopeptide (Lys-Gly) (interchain with G-Cter in SUMO2) cross-link. The C2H2-type 1 zinc-finger motif lies at Tyr613–His635. Residues Tyr641 to Cys664 form a C2H2-type 2; atypical zinc finger. Glycyl lysine isopeptide (Lys-Gly) (interchain with G-Cter in SUMO2) cross-links involve residues Lys645 and Lys658.

The protein resides in the nucleus. Its function is as follows. May be involved in transcriptional regulation. The chain is Zinc finger and BTB domain-containing protein 5 (ZBTB5) from Homo sapiens (Human).